The primary structure comprises 328 residues: Ferredoxin--NADP reductase 1 (328 aa).

FAD is bound by residues Asp28, Gln36, Tyr41, Ala81, Ile116, Asp277, and Ser320.

It belongs to the ferredoxin--NADP reductase type 2 family. Homodimer. FAD is required as a cofactor.

The enzyme catalyses 2 reduced [2Fe-2S]-[ferredoxin] + NADP(+) + H(+) = 2 oxidized [2Fe-2S]-[ferredoxin] + NADPH. This is Ferredoxin--NADP reductase 1 from Sulfolobus acidocaldarius (strain ATCC 33909 / DSM 639 / JCM 8929 / NBRC 15157 / NCIMB 11770).